The primary structure comprises 572 residues: Probable D-xylulose kinase A (572 aa).

The substrate site is built by H95, R166, D282, and N283. ATP is bound by residues W365, 470 to 471, and N474; that span reads GG.

The protein belongs to the FGGY kinase family.

It localises to the cytoplasm. It carries out the reaction D-xylulose + ATP = D-xylulose 5-phosphate + ADP + H(+). Highly specific D-xylulose kinase which participates in the catabolism of xylose. Xylose is a major component of hemicelluloses such as xylan. Most fungi utilize D-xylose via three enzymatic reactions, xylose reductase (XR), xylitol dehydrogenase (XDH), and xylulokinase, to form xylulose 5-phosphate, which enters pentose phosphate pathway. The protein is Probable D-xylulose kinase A (xkiA) of Aspergillus oryzae (strain ATCC 42149 / RIB 40) (Yellow koji mold).